A 103-amino-acid polypeptide reads, in one-letter code: UPF0145 protein BC_5181 (103 aa).

The protein belongs to the UPF0145 family.

In Bacillus cereus (strain ATCC 14579 / DSM 31 / CCUG 7414 / JCM 2152 / NBRC 15305 / NCIMB 9373 / NCTC 2599 / NRRL B-3711), this protein is UPF0145 protein BC_5181.